A 136-amino-acid polypeptide reads, in one-letter code: Small ribosomal subunit protein eS8 (136 aa).

Belongs to the eukaryotic ribosomal protein eS8 family. In terms of assembly, part of the 30S ribosomal subunit.

The polypeptide is Small ribosomal subunit protein eS8 (rps8e) (Aeropyrum pernix (strain ATCC 700893 / DSM 11879 / JCM 9820 / NBRC 100138 / K1)).